The following is a 319-amino-acid chain: Acetyl esterase (319 aa).

The Involved in the stabilization of the negatively charged intermediate by the formation of the oxyanion hole signature appears at 91–93 (HGG). Active-site residues include Ser-165, Asp-262, and His-292.

This sequence belongs to the 'GDXG' lipolytic enzyme family. As to quaternary structure, homodimer. Interacts with MalT and MelA.

It is found in the cytoplasm. In terms of biological role, displays esterase activity towards short chain fatty esters (acyl chain length of up to 8 carbons). Able to hydrolyze triacetylglycerol (triacetin) and tributyrylglycerol (tributyrin), but not trioleylglycerol (triolein) or cholesterol oleate. Negatively regulates MalT activity by antagonizing maltotriose binding. Inhibits MelA galactosidase activity. This is Acetyl esterase from Shigella boydii serotype 18 (strain CDC 3083-94 / BS512).